The following is a 523-amino-acid chain: Putative F-box protein At1g30925 (523 aa).

Positions 4–44 (FPNDDLVYEILLRLPAKSVARCSCVSKLRRSILSRQDFTEL) constitute an F-box domain.

The chain is Putative F-box protein At1g30925 from Arabidopsis thaliana (Mouse-ear cress).